Consider the following 585-residue polypeptide: Arginine--tRNA ligase (585 aa).

The 'HIGH' region signature appears at 131-141; sequence ANPTGPMHVGH.

This sequence belongs to the class-I aminoacyl-tRNA synthetase family. Monomer.

It localises to the cytoplasm. It carries out the reaction tRNA(Arg) + L-arginine + ATP = L-arginyl-tRNA(Arg) + AMP + diphosphate. The polypeptide is Arginine--tRNA ligase (Bartonella bacilliformis (strain ATCC 35685 / KC583 / Herrer 020/F12,63)).